Here is a 249-residue protein sequence, read N- to C-terminus: Hydroxyacylglutathione hydrolase (249 aa).

Zn(2+) is bound by residues H53, H55, D57, H58, H110, D127, and H165.

This sequence belongs to the metallo-beta-lactamase superfamily. Glyoxalase II family. Monomer. Zn(2+) serves as cofactor.

It catalyses the reaction an S-(2-hydroxyacyl)glutathione + H2O = a 2-hydroxy carboxylate + glutathione + H(+). Its pathway is secondary metabolite metabolism; methylglyoxal degradation; (R)-lactate from methylglyoxal: step 2/2. Functionally, thiolesterase that catalyzes the hydrolysis of S-D-lactoyl-glutathione to form glutathione and D-lactic acid. The chain is Hydroxyacylglutathione hydrolase from Hamiltonella defensa subsp. Acyrthosiphon pisum (strain 5AT).